Reading from the N-terminus, the 632-residue chain is tRNA uridine 5-carboxymethylaminomethyl modification enzyme MnmG (632 aa).

FAD is bound by residues 13 to 18 (GGGHAG), V125, and S180. NAD(+) is bound at residue 273 to 287 (GPRYCPSIEDKVMRF). Q370 lines the FAD pocket.

Belongs to the MnmG family. In terms of assembly, homodimer. Heterotetramer of two MnmE and two MnmG subunits. FAD is required as a cofactor.

The protein localises to the cytoplasm. NAD-binding protein involved in the addition of a carboxymethylaminomethyl (cmnm) group at the wobble position (U34) of certain tRNAs, forming tRNA-cmnm(5)s(2)U34. In Vibrio vulnificus (strain YJ016), this protein is tRNA uridine 5-carboxymethylaminomethyl modification enzyme MnmG.